The following is a 183-amino-acid chain: Peptidyl-tRNA hydrolase (183 aa).

TRNA is bound at residue Tyr15. His20 acts as the Proton acceptor in catalysis. TRNA-binding residues include Tyr67 and Asn69.

The protein belongs to the PTH family. In terms of assembly, monomer.

The protein resides in the cytoplasm. The catalysed reaction is an N-acyl-L-alpha-aminoacyl-tRNA + H2O = an N-acyl-L-amino acid + a tRNA + H(+). Hydrolyzes ribosome-free peptidyl-tRNAs (with 1 or more amino acids incorporated), which drop off the ribosome during protein synthesis, or as a result of ribosome stalling. Its function is as follows. Catalyzes the release of premature peptidyl moieties from peptidyl-tRNA molecules trapped in stalled 50S ribosomal subunits, and thus maintains levels of free tRNAs and 50S ribosomes. The protein is Peptidyl-tRNA hydrolase of Chlamydia caviae (strain ATCC VR-813 / DSM 19441 / 03DC25 / GPIC) (Chlamydophila caviae).